We begin with the raw amino-acid sequence, 197 residues long: Nucleoid occlusion factor SlmA (197 aa).

In terms of domain architecture, HTH tetR-type spans 7 to 67 (INRREHILQC…GLIEFIEESL (61 aa)). The H-T-H motif DNA-binding region spans 30–49 (TTAKLASEVGVSEAALYRHF).

It belongs to the nucleoid occlusion factor SlmA family. As to quaternary structure, homodimer. Interacts with FtsZ.

The protein localises to the cytoplasm. The protein resides in the nucleoid. Functionally, required for nucleoid occlusion (NO) phenomenon, which prevents Z-ring formation and cell division over the nucleoid. Acts as a DNA-associated cell division inhibitor that binds simultaneously chromosomal DNA and FtsZ, and disrupts the assembly of FtsZ polymers. SlmA-DNA-binding sequences (SBS) are dispersed on non-Ter regions of the chromosome, preventing FtsZ polymerization at these regions. This is Nucleoid occlusion factor SlmA from Shewanella oneidensis (strain ATCC 700550 / JCM 31522 / CIP 106686 / LMG 19005 / NCIMB 14063 / MR-1).